Consider the following 257-residue polypeptide: Zinc transporter ZupT (257 aa).

Helical transmembrane passes span 5–25 (LILTLLAGAATFIGAILGVIG), 32–52 (VLAFSLGFAAGIMLLISLMEM), 61–81 (GMSPVMGYGMFVVGLLGYFAL), 109–129 (AILLTLGISLHNFPEGVATYV), 137–157 (LGFGIALAVALHNIPEGLAVA), 171–191 (ILWAGISGLAEILGGVLTWLI), 195–215 (MISPVVMAAIMAAVAGIMVAL), and 236–256 (GVLCGMSVMGLSLVLLQTAGF). Residues asparagine 120 and glutamate 123 each coordinate Fe(2+). Glutamate 123 and histidine 148 together coordinate Zn(2+). Positions 149, 152, and 181 each coordinate Fe(2+). Glutamate 152 is a Zn(2+) binding site.

Belongs to the ZIP transporter (TC 2.A.5) family. ZupT subfamily.

The protein resides in the cell inner membrane. The enzyme catalyses Zn(2+)(in) = Zn(2+)(out). Functionally, mediates zinc uptake. May also transport other divalent cations. The polypeptide is Zinc transporter ZupT (Enterobacter sp. (strain 638)).